A 359-amino-acid chain; its full sequence is Protein disulfide-isomerase C17H9.14c (359 aa).

The signal sequence occupies residues 1-19 (MRLPLLSFVIFALFALVFA). 2 Thioredoxin domains span residues 20–130 (SGVV…EKTG) and 134–250 (RKIV…KKSG). Residues C51 and C54 each act as nucleophile in the active site. Cystine bridges form between C51/C54 and C170/C173.

The protein belongs to the protein disulfide isomerase family.

The catalysed reaction is Catalyzes the rearrangement of -S-S- bonds in proteins.. In terms of biological role, participates in the folding of proteins containing disulfide bonds, may be involved in glycosylation, prolyl hydroxylation and triglyceride transfer. The chain is Protein disulfide-isomerase C17H9.14c from Schizosaccharomyces pombe (strain 972 / ATCC 24843) (Fission yeast).